The sequence spans 357 residues: DNA replication and repair protein RecF (357 aa).

ATP is bound at residue Gly30–Thr37.

Belongs to the RecF family.

It localises to the cytoplasm. The RecF protein is involved in DNA metabolism; it is required for DNA replication and normal SOS inducibility. RecF binds preferentially to single-stranded, linear DNA. It also seems to bind ATP. This is DNA replication and repair protein RecF from Citrobacter koseri (strain ATCC BAA-895 / CDC 4225-83 / SGSC4696).